Consider the following 370-residue polypeptide: GTPase Obg (370 aa).

One can recognise an Obg domain in the interval 1-159 (MKFIDEARIE…RKLKLELKVL (159 aa)). The tract at residues 129–148 (HFKSSTNRAPRQKTNGKSGE) is disordered. Positions 130–145 (FKSSTNRAPRQKTNGK) are enriched in polar residues. In terms of domain architecture, OBG-type G spans 160–334 (ADVGLLGMPN…LCYSLQDYLD (175 aa)). Residues 166-173 (GMPNAGKS), 191-195 (FTTLH), 213-216 (DIPG), 284-287 (NKVD), and 315-317 (SAL) contribute to the GTP site. The Mg(2+) site is built by Ser173 and Thr193.

The protein belongs to the TRAFAC class OBG-HflX-like GTPase superfamily. OBG GTPase family. Monomer. Mg(2+) serves as cofactor.

It localises to the cytoplasm. Its function is as follows. An essential GTPase which binds GTP, GDP and possibly (p)ppGpp with moderate affinity, with high nucleotide exchange rates and a fairly low GTP hydrolysis rate. Plays a role in control of the cell cycle, stress response, ribosome biogenesis and in those bacteria that undergo differentiation, in morphogenesis control. This chain is GTPase Obg, found in Polynucleobacter necessarius subsp. necessarius (strain STIR1).